The chain runs to 111 residues: Estrogen receptor (111 aa).

The segment at 1–42 (PSGYAVREAGPPAYYRPNSDNRRQGGRERLASTSDKGSMAVE) is disordered. The modulating stretch occupies residues 1–49 (PSGYAVREAGPPAYYRPNSDNRRQGGRERLASTSDKGSMAVESAKETRY). Basic and acidic residues predominate over residues 19 to 30 (SDNRRQGGRERL). Ser32 is subject to Phosphoserine. 2 NR C4-type zinc fingers span residues 50–70 (CAVC…CEGC) and 86–110 (CPAT…LRKC). Positions 50–111 (CAVCNDYASG…CQACRLRKCY (62 aa)) form a DNA-binding region, nuclear receptor.

It belongs to the nuclear hormone receptor family. NR3 subfamily. In terms of assembly, binds DNA as a homodimer. Can form a heterodimer with ESR2. Interacts with coactivator NCOA5. Interacts with PELP1, the interaction is enhanced by 17-beta-estradiol; the interaction increases ESR1 transcriptional activity. Interacts with NCOA7; the interaction is ligand-inducible. Interacts with AKAP13, CUEDC2, HEXIM1, KDM5A, MAP1S, SMARD1, and UBE1C. Interacts with MUC1; the interaction is stimulated by 7 beta-estradiol (E2) and enhances ESR1-mediated transcription. Interacts with DNTTIP2, and UIMC1. Interacts with KMT2D/MLL2. Interacts with ATAD2; the interaction is enhanced by estradiol. Interacts with KIF18A and LDB1. Interacts with RLIM (via its C-terminus). Interacts with MACROD1. Interacts with SH2D4A and PLCG. Interacts with SH2D4A; the interaction blocks binding to PLCG and inhibits estrogen-induced cell proliferation. Interacts with DYNLL1. Interacts with CCDC62; the interaction requires estradiol and appears to enhance the transcription of target genes. Interacts with NR2C1; the interaction prevents homodimerization of ESR1 and suppresses its transcriptional activity and cell growth. Interacts with DNAAF4. Interacts with PRMT2. Interacts with RBFOX2. Interacts with EP300; the interaction is estrogen-dependent and enhanced by CITED1. Interacts with CITED1; the interaction is estrogen-dependent. Interacts with FAM120B, FOXL2, PHB2 and SLC30A9. Interacts with coactivators NCOA3 and NCOA6. Interacts with STK3/MST2 only in the presence of SAV1 and vice-versa. Binds to CSNK1D. Interacts with NCOA2; NCOA2 can interact with ESR1 AF-1 and AF-2 domains simultaneously and mediate their transcriptional synergy. Interacts with DDX5. Interacts with NCOA1; the interaction seems to require a self-association of N-terminal and C-terminal regions. Interacts with ZNF366, DDX17, NFKB1, RELA, SP1 and SP3. Interacts with NRIP1. Interacts with GPER1; the interaction occurs in an estrogen-dependent manner. Interacts with CLOCK and the interaction is stimulated by estrogen. Interacts with TRIP4 (ufmylated); estrogen dependent. Interacts with LMTK3; the interaction phosphorylates ESR1 (in vitro) and protects it against proteasomal degradation. Interacts with CCAR2 (via N-terminus) in a ligand-independent manner. Interacts with ZFHX3. Interacts with SFR1 in a ligand-dependent and -independent manner. Interacts with DCAF13, LATS1 and DCAF1; regulates ESR1 ubiquitination and ubiquitin-mediated proteasomal degradation. Interacts (via DNA-binding domain) with POU4F2 (C-terminus); this interaction increases the estrogen receptor ESR1 transcriptional activity in a DNA- and ligand 17-beta-estradiol-independent manner. Interacts with ESRRB isoform 1. Interacts with UBE3A and WBP2. Interacts with GTF2B. Interacts with RBM39. In the absence of hormonal ligand, interacts with TACC1. Interacts with PI3KR1 or PI3KR2 and PTK2/FAK1. Interacts with SRC. Interacts with BAG1; the interaction is promoted in the absence of estradiol (17-beta-estradiol/E2). Interacts with and ubiquitinated by STUB1; the interaction is promoted in the absence of estradiol (17-beta-estradiol/E2). Interacts with NEDD8. In terms of processing, ubiquitinated; regulated by LATS1 via DCAF1 it leads to ESR1 proteasomal degradation. Deubiquitinated by OTUB1. Ubiquitinated by STUB1/CHIP; in the CA1 hippocampal region following loss of endogenous circulating estradiol (17-beta-estradiol/E2). Ubiquitinated by UBR5, leading to its degradation: UBR5 specifically recognizes and binds ligand-bound ESR1 when it is not associated with coactivators (NCOAs). In presence of NCOAs, the UBR5-degron is not accessible, preventing its ubiquitination and degradation. Post-translationally, dimethylated by PRMT1. Demethylated by JMJD6. Palmitoylated by ZDHHC7 and ZDHHC21. This modification is required for plasma membrane targeting and for rapid intracellular signaling via ERK and AKT kinases and cAMP generation, but not for signaling mediated by the nuclear hormone receptor. In terms of processing, phosphorylated by cyclin A/CDK2 and CK1. Phosphorylation probably enhances transcriptional activity. Dephosphorylation by PPP5C inhibits its transactivation activity. Phosphorylated by LMTK3 (in vitro).

It localises to the nucleus. Its subcellular location is the cytoplasm. It is found in the golgi apparatus. The protein localises to the cell membrane. In terms of biological role, nuclear hormone receptor. The steroid hormones and their receptors are involved in the regulation of eukaryotic gene expression and affect cellular proliferation and differentiation in target tissues. Ligand-dependent nuclear transactivation involves either direct homodimer binding to a palindromic estrogen response element (ERE) sequence or association with other DNA-binding transcription factors, such as AP-1/c-Jun, c-Fos, ATF-2, Sp1 and Sp3, to mediate ERE-independent signaling. Ligand binding induces a conformational change allowing subsequent or combinatorial association with multiprotein coactivator complexes through LXXLL motifs of their respective components. Mutual transrepression occurs between the estrogen receptor (ER) and NF-kappa-B in a cell-type specific manner. Decreases NF-kappa-B DNA-binding activity and inhibits NF-kappa-B-mediated transcription from the IL6 promoter and displace RELA/p65 and associated coregulators from the promoter. Recruited to the NF-kappa-B response element of the CCL2 and IL8 promoters and can displace CREBBP. Present with NF-kappa-B components RELA/p65 and NFKB1/p50 on ERE sequences. Can also act synergistically with NF-kappa-B to activate transcription involving respective recruitment adjacent response elements; the function involves CREBBP. Can activate the transcriptional activity of TFF1. Also mediates membrane-initiated estrogen signaling involving various kinase cascades. Essential for MTA1-mediated transcriptional regulation of BRCA1 and BCAS3. Maintains neuronal survival in response to ischemic reperfusion injury when in the presence of circulating estradiol (17-beta-estradiol/E2). This chain is Estrogen receptor (ESR1), found in Ovis aries (Sheep).